The primary structure comprises 122 residues: Small ribosomal subunit protein uS12 (122 aa).

The protein belongs to the universal ribosomal protein uS12 family. As to quaternary structure, part of the 30S ribosomal subunit. Contacts proteins S8 and S17. May interact with IF1 in the 30S initiation complex.

Its function is as follows. With S4 and S5 plays an important role in translational accuracy. Interacts with and stabilizes bases of the 16S rRNA that are involved in tRNA selection in the A site and with the mRNA backbone. Located at the interface of the 30S and 50S subunits, it traverses the body of the 30S subunit contacting proteins on the other side and probably holding the rRNA structure together. The combined cluster of proteins S8, S12 and S17 appears to hold together the shoulder and platform of the 30S subunit. In Corynebacterium efficiens (strain DSM 44549 / YS-314 / AJ 12310 / JCM 11189 / NBRC 100395), this protein is Small ribosomal subunit protein uS12.